The primary structure comprises 320 residues: Cytochrome f (320 aa).

An N-terminal signal peptide occupies residues 1-35 (MQTRKTFSWIKEQINRSISVSLMIYIITRPSISIA). Positions 36, 56, 59, and 60 each coordinate heme. The chain crosses the membrane as a helical span at residues 286-306 (VQGLLFFLASVILAQIFLVLK).

This sequence belongs to the cytochrome f family. In terms of assembly, the 4 large subunits of the cytochrome b6-f complex are cytochrome b6, subunit IV (17 kDa polypeptide, petD), cytochrome f and the Rieske protein, while the 4 small subunits are PetG, PetL, PetM and PetN. The complex functions as a dimer. Heme serves as cofactor.

It localises to the plastid. The protein localises to the chloroplast thylakoid membrane. Functionally, component of the cytochrome b6-f complex, which mediates electron transfer between photosystem II (PSII) and photosystem I (PSI), cyclic electron flow around PSI, and state transitions. This Daucus carota (Wild carrot) protein is Cytochrome f.